The following is a 294-amino-acid chain: MGRQPCCDKLGVKKGPWTAEEDKKLISFILTNGQCCWRAVPKLAGLKRCGKSCRLRWTNYLRPDLKRGLLSDAEEKLVIDLHSRLGNRWSKIAARLPGRTDNEIKNHWNTHIKKKLLKMGIDPVTHEPLKKEANLSDQPTTESDQNKENGHQQVQVVPQSTNVTAAAATSTEFDNNSSFSSSASSSENSSCTTDESKLVFDNLSENDPLLSCLLEADTPLIDSPWEFPMSSTTTVEEPKSFDSIISNMTSWEDTFNWLSGYQEFGINDFGFDNCFNHVELDIFKTIDNVENRHG.

HTH myb-type domains follow at residues 9–61 (KLGV…TNYL) and 62–116 (RPDL…KKKL). 2 consecutive DNA-binding regions (H-T-H motif) follow at residues 37-61 (WRAV…TNYL) and 89-112 (WSKI…NTHI). Disordered regions lie at residues 128–152 (PLKK…NGHQ) and 171–191 (TEFD…NSSC).

In terms of tissue distribution, restricted to the petals, with the highest expression in the limb, probably in both epidermal and mesophyll cell layers.

The protein localises to the nucleus. Functionally, R2R3 MYB-type transcription factor controlling the production of volatile organic compounds (VOCs), including floral volatile benzenoids and phenylpropanoids (FVBP), in flowers of fragrant cultivars (e.g. cv. Mitchell and cv. V26) by regulating the shikimate pathway, via the activation of several genes (e.g. EPSPS, ADT1, PAL1, CFAT and CCoAOMT1). This scent, mostly produced in the evening and night by the petals, attracts the pollinators (e.g. the night-active hawkmoth pollinator Manduca sexta). Promotes the expression of ABCG1 in petals three hours before the onset of volatile scent emission. Anthocyanins production is not controlled by ODO1 as color and scent are produced at different stages of development. Seems to trigger a negative feed-back loop that represses the expression of EOBI. In Petunia hybrida (Petunia), this protein is MYB-like transcription factor ODO1.